Consider the following 115-residue polypeptide: NADH-ubiquinone oxidoreductase chain 3 (115 aa).

The next 3 membrane-spanning stretches (helical) occupy residues Leu3 to Trp23, Phe55 to Leu75, and Val87 to Ile107.

The protein belongs to the complex I subunit 3 family. As to quaternary structure, core subunit of respiratory chain NADH dehydrogenase (Complex I) which is composed of 45 different subunits. Interacts with TMEM186. Interacts with TMEM242.

The protein resides in the mitochondrion inner membrane. It carries out the reaction a ubiquinone + NADH + 5 H(+)(in) = a ubiquinol + NAD(+) + 4 H(+)(out). Functionally, core subunit of the mitochondrial membrane respiratory chain NADH dehydrogenase (Complex I) which catalyzes electron transfer from NADH through the respiratory chain, using ubiquinone as an electron acceptor. Essential for the catalytic activity of complex I. The polypeptide is NADH-ubiquinone oxidoreductase chain 3 (Oryctolagus cuniculus (Rabbit)).